The following is a 356-amino-acid chain: UDP-N-acetylglucosamine--N-acetylmuramyl-(pentapeptide) pyrophosphoryl-undecaprenol N-acetylglucosamine transferase (356 aa).

UDP-N-acetyl-alpha-D-glucosamine-binding residues include arginine 166, serine 196, and glutamine 290.

Belongs to the glycosyltransferase 28 family. MurG subfamily.

The protein resides in the cell membrane. It catalyses the reaction Mur2Ac(oyl-L-Ala-gamma-D-Glu-L-Lys-D-Ala-D-Ala)-di-trans,octa-cis-undecaprenyl diphosphate + UDP-N-acetyl-alpha-D-glucosamine = beta-D-GlcNAc-(1-&gt;4)-Mur2Ac(oyl-L-Ala-gamma-D-Glu-L-Lys-D-Ala-D-Ala)-di-trans,octa-cis-undecaprenyl diphosphate + UDP + H(+). Its pathway is cell wall biogenesis; peptidoglycan biosynthesis. In terms of biological role, cell wall formation. Catalyzes the transfer of a GlcNAc subunit on undecaprenyl-pyrophosphoryl-MurNAc-pentapeptide (lipid intermediate I) to form undecaprenyl-pyrophosphoryl-MurNAc-(pentapeptide)GlcNAc (lipid intermediate II). This chain is UDP-N-acetylglucosamine--N-acetylmuramyl-(pentapeptide) pyrophosphoryl-undecaprenol N-acetylglucosamine transferase, found in Staphylococcus aureus (strain MRSA252).